Reading from the N-terminus, the 576-residue chain is Vesicular glutamate transporter 1 (576 aa).

Residues 1–63 (MEFRKEEFKK…CTCFGLPRRY (63 aa)) are Cytoplasmic-facing. Residues 64-84 (IIAIMSGLGFCISFGIRCNLG) form a helical membrane-spanning segment. Residues 85–116 (VAIVSMVNNNTVYKGNKLVIEQAQFNWDPETV) are Vesicular-facing. N-linked (GlcNAc...) asparagine glycosylation is present at N93. Residues 117–137 (GMIHGSFFWGYIVTQIPGGYI) traverse the membrane as a helical segment. Residues 138-140 (CQK) lie on the Cytoplasmic side of the membrane. A helical transmembrane segment spans residues 141–161 (FAANRVFGFAIVATSTLNMLI). Over 162–168 (PSAARVH) the chain is Vesicular. A helical membrane pass occupies residues 169–189 (FACVICVRILQGLVEGVTYPA). At 190–208 (CHGIWSKWAPPLERSRLAT) the chain is on the cytoplasmic side. A helical transmembrane segment spans residues 209 to 229 (TAFCGSYAGAVVAMPLAGVLV). At 230–236 (QYSGWSS) the chain is on the vesicular side. The chain crosses the membrane as a helical span at residues 237–257 (VFYVYGSFGITWYMFWILVSY). Residues 258–297 (ESPAQHPTISEEERKYIEESIGESTGFMNPMAKFKAPWRK) are Cytoplasmic-facing. Residues 298-320 (FFTSMPVYAIIVANFCRSWTFYL) form a helical membrane-spanning segment. Over 321–341 (LLISQPAYFEEVFGFAISKVG) the chain is Vesicular. A helical transmembrane segment spans residues 342–362 (LLSALPHLVMTIIVPIGGQIA). At 363–378 (DFLRTKRIMSTTNVRK) the chain is on the cytoplasmic side. A helical transmembrane segment spans residues 379-399 (MMNCGGFGMEATLLLVVGYSH). Over 400–401 (SR) the chain is Vesicular. The helical transmembrane segment at 402 to 422 (GVAISFLVLAVGFSGFAISGF) threads the bilayer. The Cytoplasmic portion of the chain corresponds to 423–435 (NVNHLDIAPRYAS). The helical transmembrane segment at 436–456 (ILMGISNGVGTLSGMVCPLIV) threads the bilayer. Residues 457 to 469 (GAMTKHKTREEWQ) lie on the Vesicular side of the membrane. The helical transmembrane segment at 470–490 (YVFLIASLVHYGGVVFYGIFA) threads the bilayer. The Cytoplasmic segment spans residues 491 to 576 (SGEKQPWAEP…YGTVAERDLS (86 aa)). The interval 517–552 (ADESEEQTQAHGGYGSYGATQTTSQQNGGWATDWEK) is disordered. The segment covering 534-545 (GATQTTSQQNGG) has biased composition (polar residues).

Belongs to the major facilitator superfamily. Sodium/anion cotransporter family. VGLUT subfamily.

The protein resides in the cytoplasmic vesicle. It localises to the secretory vesicle. The protein localises to the synaptic vesicle membrane. Its subcellular location is the cell membrane. It is found in the synapse. The protein resides in the synaptosome. It catalyses the reaction L-glutamate(out) = L-glutamate(in). It carries out the reaction chloride(in) = chloride(out). The enzyme catalyses 3 Na(+)(out) + phosphate(out) = 3 Na(+)(in) + phosphate(in). The catalysed reaction is phosphate(in) = phosphate(out). It catalyses the reaction K(+)(in) + H(+)(out) = K(+)(out) + H(+)(in). Chloride channel activity is allosterically activated by lumenal H(+) and Cl(-) leading to synaptic vesicles acidification. The L-glutamate transport activity is allosterically activated by lumenal H(+) and Cl(-). The allosteric activation by H(+) efficiently prevents non-vesicular efflux across the plasma membrane, thereby restricting L-glutamate transport activity to acidic membranes such as synaptic vesicles. Multifunctional transporter that transports L-glutamate as well as multiple ions such as chloride, proton, potassium, sodium and phosphate. At the synaptic vesicle membrane, mainly functions as an uniporter which transports preferentially L-glutamate but also phosphate from the cytoplasm into synaptic vesicles at presynaptic nerve terminals of excitatory neural cells. The L-glutamate or phosphate uniporter activity is electrogenic and is driven by the proton electrochemical gradient, mainly by the electrical gradient established by the vacuolar H(+)-ATPase across the synaptic vesicle membrane. In addition, functions as a chloride channel that allows a chloride permeation through the synaptic vesicle membrane that affects the proton electrochemical gradient and promotes synaptic vesicles acidification. Moreover, may function as a K(+)/H(+) antiport allowing to maintain the electrical gradient and to decrease chemical gradient and therefore sustain vesicular glutamate uptake. The vesicular K(+)/H(+) antiport activity is electroneutral. At the plasma membrane, following exocytosis, functions as a symporter of Na(+) and phosphate from the extracellular space to the cytoplasm allowing synaptic phosphate homeostasis regulation. The symporter activity is driven by an inside negative membrane potential and is electrogenic. Is necessary for synaptic signaling of visual-evoked responses from photoreceptors. In Xenopus laevis (African clawed frog), this protein is Vesicular glutamate transporter 1.